Reading from the N-terminus, the 478-residue chain is MSSSTPTTPSIERTASTIWGGRFDSGPSAVMEAINASIGFDKRLYRQDIAGSKAHCTMLVATGILSKADGEAILGGLDRILAEIEAGDFPFSVALEDIHMNIESRLKDLIGEAAGRLHTARSRNDQVATDFRLWVRDAIDGVEGALARLQDVLITRAEEHADTVMPGFTHLQAAQPVTFGHHLLAYVEMIGRDRGRFHDARVRLNESPLGSAALAGTSFPIDRAMTAQILGFDRPCANSLDGVSDRDFALEFLAAASIASIHLSRLAEELVIWTSAQFGFVRLPDAYSTGSSIMPQKRNPDAAELVRAKAGRVIGDLASLLIVMKGLPLAYSKDMQDDKEPVFEAADTLELCIAAMTGMMETITPKVDRLRTAAGQGFTTATDLADWLVRALGTPFRHAHEVSGALVKMAEKKGVGLEDLSLAEMRTIEPRLTDEAIKVLSVDWSVRSRTSFGGTAPDNVRAACAAARARYAAKAPPR.

It belongs to the lyase 1 family. Argininosuccinate lyase subfamily.

It localises to the cytoplasm. It carries out the reaction 2-(N(omega)-L-arginino)succinate = fumarate + L-arginine. It functions in the pathway amino-acid biosynthesis; L-arginine biosynthesis; L-arginine from L-ornithine and carbamoyl phosphate: step 3/3. This Rhodospirillum rubrum (strain ATCC 11170 / ATH 1.1.1 / DSM 467 / LMG 4362 / NCIMB 8255 / S1) protein is Argininosuccinate lyase.